Consider the following 134-residue polypeptide: Cytochrome b5 isoform E (134 aa).

The Cytochrome b5 heme-binding domain maps to 5–81; sequence RKVLSFEEVS…MDKYFIGEID (77 aa). Positions 40 and 64 each coordinate heme. A helical transmembrane segment spans residues 107–127; the sequence is FIIKILQFLVPILILGLALVV. The AKR2A-binding sequence (ABS) required for endoplasmic reticulum membrane targeting motif lies at 128-134; it reads RHYTKKD.

It belongs to the cytochrome b5 family. Interacts with CER1, BI-1, FAH1 and FAH2. Interacts with AKR2A. Expressed in roots, stems, leaves, flowers and siliques.

The protein resides in the cell membrane. It is found in the endoplasmic reticulum membrane. Its function is as follows. Membrane bound hemoprotein which function as an electron carrier for several membrane bound oxygenases, including fatty acid desaturases. The chain is Cytochrome b5 isoform E (CYTB5-E) from Arabidopsis thaliana (Mouse-ear cress).